The primary structure comprises 795 residues: Plakophilin-2 (795 aa).

The interval 1–318 is required for binding to single-stranded DNA; that stretch reads MAVPGSLAEC…MTLERAVNML (318 aa). The residue at position 44 (Ser-44) is a Phosphoserine. Arg-46 is modified (omega-N-methylarginine). Phosphoserine is present on residues Ser-82, Ser-132, Ser-135, Ser-151, Ser-154, Ser-155, Ser-172, Ser-188, and Ser-232. 2 disordered regions span residues 197 to 233 and 245 to 274; these read GTARRPPGCGSFSDAVFDNGPLKPTMPTHPPGTSHSA and SQARLQSTQSRTARSSWPRSSVRSSLREPG. Polar residues predominate over residues 245–257; sequence SQARLQSTQSRTA. Positions 258–268 are enriched in low complexity; that stretch reads RSSWPRSSVRS. Phosphoserine is present on residues Ser-265 and Ser-287. 8 ARM repeats span residues 299-339, 343-382, 385-425, 484-530, 585-625, 633-672, 677-718, and 721-763; these read DAQL…QHES, SEARKRVNQLRGIPKLLQLLKLQNEDVQRAACGALRNLVF, NDNK…NLSS, PDGR…NLSY, PHGI…NLTA, LVARMVVQKENGLQHTRKMLHVGDPSVKKTAVSLLRNLSR, QNEI…NLMQ, and YQNA…SLWA.

The protein belongs to the beta-catenin family. In terms of assembly, interacts with DSC2. Interacts with JUP. Interacts with KRT5/CK5, KRT8/CK8, KRT14/CK14, KRT18/CK18 and VIM. Interacts (via N-terminus) with MARK3/C-TAK1. Interacts with DSP. Interacts with DSG1, DSG2 and DSG3. Interacts (via N-terminus) with CTNNB1. Interacts with CDH1. Interacts with the RNA polymerase III (Pol III) complex proteins POLR3A/RPC155, POLR3F/RPC39 and POLR3C/RPC82. Interacts with CTNNA3. Interacts (via N-terminus) with SCN5A/Nav1.5. Interacts with ANK3/ANKG and GJA1/CX43. As to expression, expressed in cardiomyocytes in the heart (at protein level).

The protein localises to the nucleus. It is found in the cell junction. It localises to the desmosome. Its subcellular location is the cytoplasm. Its function is as follows. A component of desmosome cell-cell junctions which are required for positive regulation of cellular adhesion. Regulates focal adhesion turnover resulting in changes in focal adhesion size, cell adhesion and cell spreading, potentially via transcriptional modulation of beta-integrins. Required to maintain gingival epithelial barrier function. Important component of the desmosome that is also required for localization of desmosome component proteins such as DSC2, DSG2 and JUP to the desmosome cell-cell junction. Required for the formation of desmosome cell junctions in cardiomyocytes, thereby required for the correct formation of the heart, specifically trabeculation and formation of the atria walls. Loss of desmosome cell junctions leads to mis-localization of DSP and DSG2 resulting in disruption of cell-cell adhesion and disordered intermediate filaments. Modulates profibrotic gene expression in cardiomyocytes via regulation of DSP expression and subsequent activation of downstream TGFB1 and MAPK14/p38 MAPK signaling. Required for cardiac sodium current propagation and electrical synchrony in cardiac myocytes, via ANK3 stabilization and modulation of SCN5A/Nav1.5 localization to cell-cell junctions. Required for mitochondrial function, nuclear envelope integrity and positive regulation of SIRT3 transcription via maintaining DES localization at its nuclear envelope and cell tip anchoring points, and thereby preserving regulation of the transcriptional program. Maintenance of nuclear envelope integrity protects against DNA damage and transcriptional dysregulation of genes, especially those involved in the electron transport chain, thereby preserving mitochondrial function and protecting against superoxide radical anion generation. Binds single-stranded DNA (ssDNA). May regulate the localization of GJA1 to gap junctions in intercalated disks of the heart. The chain is Plakophilin-2 from Mus musculus (Mouse).